Here is an 816-residue protein sequence, read N- to C-terminus: Sucrose synthase 2 (816 aa).

The segment at 280–757 (MVLNVVILSP…GLQRIEEKYT (478 aa)) is GT-B glycosyltransferase.

The protein belongs to the glycosyltransferase 1 family. Plant sucrose synthase subfamily. In terms of assembly, forms homotetramers and heterotetramers with SS1, all three possible heterotetramers are formed. Abundant in developing endosperm, low in aleurone, and undetected in coleoptiles and roots. Also detected in crude extracts of anthers and in immature embryos.

The catalysed reaction is an NDP-alpha-D-glucose + D-fructose = a ribonucleoside 5'-diphosphate + sucrose + H(+). Functionally, sucrose-cleaving enzyme that provides UDP-glucose and fructose for various metabolic pathways. The polypeptide is Sucrose synthase 2 (SS2) (Hordeum vulgare (Barley)).